A 289-amino-acid chain; its full sequence is Serine/threonine-protein phosphatase PGAM5, mitochondrial (289 aa).

Residues 1–6 (MAFRQA) lie on the Mitochondrial matrix side of the membrane. Residues 7 to 29 (LQLAACGLAGGSAAVLFSAVAVG) traverse the membrane as a helical segment. Residues 30 to 289 (KPRAGGDAEP…FMPPDKITRS (260 aa)) are Mitochondrial intermembrane-facing. Residues 32–59 (RAGGDAEPRPAEPPAWAGGARPGPGVWD) are disordered. Positions 45–56 (PAWAGGARPGPG) are enriched in low complexity. The segment at 77–82 (NVESGE) is interaction with KEAP1. 2 positions are modified to phosphoserine: S80 and S87. N6-acetyllysine is present on residues K116, K144, and K191.

This sequence belongs to the phosphoglycerate mutase family. BPG-dependent PGAM subfamily. As to quaternary structure, dimer. Forms a ternary complex with NFE2L2 and KEAP1. Interacts with BCL2L1 and MAP3K5. Upon TNF-induced necrosis, forms in complex with RIPK1, RIPK3 and MLKL; the formation of this complex leads to PGAM5 phosphorylation. Isoform 2, but not isoform 1, interacts with DNM1L; this interaction leads to DNM1L dephosphorylation and activation and eventually to mitochondria fragmentation. Both isoform 1 and isoform 2 are phosphorylated by the RIPK1/RIPK3 complex under necrotic conditions. This phosphorylation increases PGAM5 phosphatase activity. In terms of processing, proteolytically cleaved by PARL in response to loss of mitochondrial membrane potential.

It localises to the mitochondrion outer membrane. The protein resides in the mitochondrion inner membrane. The enzyme catalyses O-phospho-L-seryl-[protein] + H2O = L-seryl-[protein] + phosphate. It catalyses the reaction O-phospho-L-threonyl-[protein] + H2O = L-threonyl-[protein] + phosphate. Mitochondrial serine/threonine phosphatase that dephosphorylates various substrates and thus plays a role in different biological processes including cellular senescence or mitophagy. Modulates cellular senescence by regulating mitochondrial dynamics. Mechanistically, participates in mitochondrial fission through dephosphorylating DNM1L/DRP1. Additionally, dephosphorylates MFN2 in a stress-sensitive manner and consequently protects it from ubiquitination and degradation to promote mitochondrial network formation. Regulates mitophagy independent of PARKIN by interacting with and dephosphorylating FUNDC1, which interacts with LC3. Regulates anti-oxidative response by forming a tertiary complex with KEAP1 and NRF2. Regulates necroptosis by acting as a RIPK3 target and recruiting the RIPK1-RIPK3-MLKL necrosis 'attack' complex to mitochondria. In Homo sapiens (Human), this protein is Serine/threonine-protein phosphatase PGAM5, mitochondrial (PGAM5).